The primary structure comprises 842 residues: MSEYNFTKIEKKWQDYWDKHKTYKVNEDPNIPKEKRIYILDMFPYPSANGLHVGHPEGYTATDILTRYKLLNGFNVLHPIGFDSFGLPAENYAIQTGEHPKKITEKNIKKFKEQIKALGFAYDWDREIRTHDENYYKWTQWIFLKLYKKGLAYTKEMPVWYCPDLGTVLSNEEVIQTPDGPRSERGFHKVKRKPLRQWILKITEYAERLIKDLEEIDWPESVKEMQKNWIGKSTGAEIEFSVKASKEKIKVFTTRPDTIFGVTYLVLAPEHSIVDKITKDEFKPMIVEYRERETLKSDLERTSLEKDKTGVFTGAYAINPITGEEIPIWIGSYILGTYGTGAVMSVPAHDARDFEFAKKYNLPIKQVVSQTGNNEILTQPFTENGISINTPEEFNNLKTDEIKERVIKWLTENKKGQKKVNYKLRDWIFSRQRYWGEPIPIILDDDLNEIPLEEDELPLRLPEIENYKPSGTGESPLSRIQDWVNIKRNGKTYKRETNTMPQWAGSCWYYIRYLDPNNDNEFASKEKINYWMPVDLYIGGAEHSVLHLLYARFWHKVLYDLGYVNTKEPFKKLINQGMITSFAYQDENGILIPNDEVEKKDNKFFSKKNNKELKQIVAKMSKSLKNIINPDDIIKEYGADSMRIYEMFMGPLTDSKPWNTQGLIGIFRFLNKIWTIKNKELTKESASKEIISELHKTIKKVTEDIENLNFNTAISSLMIFINELLKHDKNYLEIFKPLTIILSPFAPHLGEELWEYMGETPSIFKSAKWPEYDPNLIIDNTREIVLQINGKIKDKIILNKGTNEEALKSIALKNHKIMQNIQNKQIIKIITVKDKLINIVTR.

The 'HIGH' region motif lies at 44-55; the sequence is PYPSANGLHVGH. Residues 619-623 carry the 'KMSKS' region motif; it reads KMSKS. Residue Lys622 coordinates ATP.

This sequence belongs to the class-I aminoacyl-tRNA synthetase family.

The protein localises to the cytoplasm. The enzyme catalyses tRNA(Leu) + L-leucine + ATP = L-leucyl-tRNA(Leu) + AMP + diphosphate. The protein is Leucine--tRNA ligase of Borrelia hermsii (strain HS1 / DAH).